A 529-amino-acid chain; its full sequence is AAA ATPase forming ring-shaped complexes (529 aa).

Positions Met15–Gly62 form a coiled coil. Gly253 to Leu258 contacts ATP.

The protein belongs to the AAA ATPase family. In terms of assembly, homohexamer. Assembles into a hexameric ring structure.

This is AAA ATPase forming ring-shaped complexes from Bifidobacterium dentium (strain ATCC 27534 / DSM 20436 / JCM 1195 / Bd1).